The primary structure comprises 210 residues: Cell division protein SepF (210 aa).

Residues 13 to 78 form a disordered region; it reads GFGEPTGYDY…VTSTAMNPPM (66 aa). Residues 22-31 show a composition bias toward acidic residues; sequence YDYDEMEGDD. Residues 47 to 60 are compositionally biased toward basic and acidic residues; that stretch reads RSEEPHPRPSEPEM. A compositionally biased stretch (polar residues) spans 64 to 78; it reads VNTSAVTSTAMNPPM.

Belongs to the SepF family. As to quaternary structure, homodimer. Interacts with FtsZ.

The protein localises to the cytoplasm. In terms of biological role, cell division protein that is part of the divisome complex and is recruited early to the Z-ring. Probably stimulates Z-ring formation, perhaps through the cross-linking of FtsZ protofilaments. Its function overlaps with FtsA. This chain is Cell division protein SepF, found in Cyanothece sp. (strain PCC 7425 / ATCC 29141).